The sequence spans 124 residues: Type-4 ice-structuring protein (124 aa).

A signal peptide spans 1–20 (MKFSLIAAVALLALAQGSFA). Residue glutamine 21 is modified to Pyrrolidone carboxylic acid.

Belongs to the apolipoprotein A1/A4/E family.

It is found in the secreted. Functionally, antifreeze proteins lower the blood freezing point. The sequence is that of Type-4 ice-structuring protein from Paralichthys olivaceus (Bastard halibut).